The primary structure comprises 187 residues: Ethylene-responsive transcription factor ERF015 (187 aa).

A DNA-binding region (AP2/ERF) is located at residues 26–83; it reads CYRGVRKRSWGKWVSEIRVPKTGRRIWLGSYDAPEKAARAYDAALFCIRGEKGVYNFP.

The protein belongs to the AP2/ERF transcription factor family. ERF subfamily.

It localises to the nucleus. Its function is as follows. Probably acts as a transcriptional activator. Binds to the GCC-box pathogenesis-related promoter element. May be involved in the regulation of gene expression by stress factors and by components of stress signal transduction pathways. This is Ethylene-responsive transcription factor ERF015 (ERF015) from Arabidopsis thaliana (Mouse-ear cress).